We begin with the raw amino-acid sequence, 227 residues long: Ribosomal RNA small subunit methyltransferase G (227 aa).

S-adenosyl-L-methionine contacts are provided by residues glycine 74, leucine 79, 124–125 (AE), and arginine 142.

Belongs to the methyltransferase superfamily. RNA methyltransferase RsmG family.

The protein localises to the cytoplasm. Its function is as follows. Specifically methylates the N7 position of guanine in position 518 of 16S rRNA. The polypeptide is Ribosomal RNA small subunit methyltransferase G (Mycolicibacterium gilvum (strain PYR-GCK) (Mycobacterium gilvum (strain PYR-GCK))).